Here is a 442-residue protein sequence, read N- to C-terminus: ATP-dependent protease ATPase subunit HslU (442 aa).

Residues isoleucine 18 and 60–65 contribute to the ATP site; that span reads GVGKTE. A disordered region spans residues 136–156; sequence LPKPKNDWDSTDSDANSNTRQ. Residues aspartate 255, glutamate 320, and arginine 392 each coordinate ATP.

Belongs to the ClpX chaperone family. HslU subfamily. A double ring-shaped homohexamer of HslV is capped on each side by a ring-shaped HslU homohexamer. The assembly of the HslU/HslV complex is dependent on binding of ATP.

The protein resides in the cytoplasm. In terms of biological role, ATPase subunit of a proteasome-like degradation complex; this subunit has chaperone activity. The binding of ATP and its subsequent hydrolysis by HslU are essential for unfolding of protein substrates subsequently hydrolyzed by HslV. HslU recognizes the N-terminal part of its protein substrates and unfolds these before they are guided to HslV for hydrolysis. In Shewanella sp. (strain MR-7), this protein is ATP-dependent protease ATPase subunit HslU.